We begin with the raw amino-acid sequence, 750 residues long: Photosystem I P700 chlorophyll a apoprotein A1 (750 aa).

8 helical membrane-spanning segments follow: residues Val70–Ala93, Leu156–His179, Leu195–Leu219, Ile291–Tyr309, Trp346–Tyr369, Leu385–Val411, Ala433–His455, and Phe531–Leu549. 2 residues coordinate [4Fe-4S] cluster: Cys573 and Cys582. The next 2 helical transmembrane spans lie at His589 to Trp610 and Leu664 to Phe686. Position 675 (His675) interacts with chlorophyll a'. Positions 683 and 691 each coordinate chlorophyll a. Trp692 is a binding site for phylloquinone. Residues Ala724–Ala744 form a helical membrane-spanning segment.

Belongs to the PsaA/PsaB family. The PsaA/B heterodimer binds the P700 chlorophyll special pair and subsequent electron acceptors. PSI consists of a core antenna complex that captures photons, and an electron transfer chain that converts photonic excitation into a charge separation. The eukaryotic PSI reaction center is composed of at least 11 subunits. P700 is a chlorophyll a/chlorophyll a' dimer, A0 is one or more chlorophyll a, A1 is one or both phylloquinones and FX is a shared 4Fe-4S iron-sulfur center. is required as a cofactor.

Its subcellular location is the plastid. It localises to the chloroplast thylakoid membrane. The catalysed reaction is reduced [plastocyanin] + hnu + oxidized [2Fe-2S]-[ferredoxin] = oxidized [plastocyanin] + reduced [2Fe-2S]-[ferredoxin]. In terms of biological role, psaA and PsaB bind P700, the primary electron donor of photosystem I (PSI), as well as the electron acceptors A0, A1 and FX. PSI is a plastocyanin-ferredoxin oxidoreductase, converting photonic excitation into a charge separation, which transfers an electron from the donor P700 chlorophyll pair to the spectroscopically characterized acceptors A0, A1, FX, FA and FB in turn. Oxidized P700 is reduced on the lumenal side of the thylakoid membrane by plastocyanin. This is Photosystem I P700 chlorophyll a apoprotein A1 from Solanum bulbocastanum (Wild potato).